The primary structure comprises 101 residues: Small ribosomal subunit protein bS18c (101 aa).

A compositionally biased stretch (basic residues) spans 1–19; it reads MDKSKQPFRKSKRSFRRRL. The segment at 1–24 is disordered; sequence MDKSKQPFRKSKRSFRRRLPPIGS.

Belongs to the bacterial ribosomal protein bS18 family. As to quaternary structure, part of the 30S ribosomal subunit.

The protein resides in the plastid. The protein localises to the chloroplast. This Amborella trichopoda protein is Small ribosomal subunit protein bS18c.